The primary structure comprises 255 residues: Hydroxyacylglutathione hydrolase (255 aa).

7 residues coordinate Zn(2+): His-53, His-55, Asp-57, His-58, His-111, Asp-128, and His-166.

This sequence belongs to the metallo-beta-lactamase superfamily. Glyoxalase II family. Monomer. Zn(2+) serves as cofactor.

It catalyses the reaction an S-(2-hydroxyacyl)glutathione + H2O = a 2-hydroxy carboxylate + glutathione + H(+). Its pathway is secondary metabolite metabolism; methylglyoxal degradation; (R)-lactate from methylglyoxal: step 2/2. Its function is as follows. Thiolesterase that catalyzes the hydrolysis of S-D-lactoyl-glutathione to form glutathione and D-lactic acid. The protein is Hydroxyacylglutathione hydrolase of Nitrosomonas eutropha (strain DSM 101675 / C91 / Nm57).